The primary structure comprises 388 residues: Acetate kinase (388 aa).

Asparagine 14 is a binding site for Mg(2+). Lysine 21 is an ATP binding site. Substrate is bound at residue arginine 80. Residue aspartate 137 is the Proton donor/acceptor of the active site. Residues 197-201 (HLGNG), 271-273 (DFR), and 319-323 (GIGEH) contribute to the ATP site. Glutamate 373 lines the Mg(2+) pocket.

This sequence belongs to the acetokinase family. In terms of assembly, homodimer. It depends on Mg(2+) as a cofactor. Requires Mn(2+) as cofactor.

The protein localises to the cytoplasm. The catalysed reaction is acetate + ATP = acetyl phosphate + ADP. The protein operates within metabolic intermediate biosynthesis; acetyl-CoA biosynthesis; acetyl-CoA from acetate: step 1/2. Catalyzes the formation of acetyl phosphate from acetate and ATP. Can also catalyze the reverse reaction. The protein is Acetate kinase of Mycobacterium marinum (strain ATCC BAA-535 / M).